A 46-amino-acid polypeptide reads, in one-letter code: Esculentin-1 (46 aa).

Cysteines 40 and 46 form a disulfide.

The protein belongs to the frog skin active peptide (FSAP) family. Brevinin subfamily. Expressed by the skin glands.

The protein resides in the secreted. In terms of biological role, shows antibacterial activity against representative Gram-negative and Gram-positive bacterial species, and hemolytic activity. This chain is Esculentin-1, found in Pelophylax lessonae (Pool frog).